The following is a 501-amino-acid chain: Uridine kinase (501 aa).

At serine 17 the chain carries Phosphoserine. An ATP-binding site is contributed by 63–70 (GASGSGKT). Residue serine 276 is modified to Phosphoserine.

It belongs to the uridine kinase family.

The protein resides in the cytoplasm. It localises to the nucleus. The catalysed reaction is uridine + ATP = UMP + ADP + H(+). It carries out the reaction cytidine + ATP = CMP + ADP + H(+). The protein operates within pyrimidine metabolism; CTP biosynthesis via salvage pathway; CTP from cytidine: step 1/3. It functions in the pathway pyrimidine metabolism; UMP biosynthesis via salvage pathway; UMP from uridine: step 1/1. In terms of biological role, catalyzes the conversion of uridine into UMP and cytidine into CMP in the pyrimidine salvage pathway. The sequence is that of Uridine kinase (URK1) from Saccharomyces cerevisiae (strain ATCC 204508 / S288c) (Baker's yeast).